The following is a 364-amino-acid chain: Glycerol dehydrogenase (364 aa).

NAD(+)-binding residues include Asp-37, Gly-92, Lys-93, Thr-114, and Ser-117. Asp-119 lines the glycerol pocket. Residues Ser-123, Leu-125, and Tyr-129 each coordinate NAD(+). Positions 169, 252, and 269 each coordinate glycerol. 3 residues coordinate Zn(2+): Asp-169, His-252, and His-269.

This sequence belongs to the iron-containing alcohol dehydrogenase family. It depends on Zn(2+) as a cofactor.

It catalyses the reaction glycerol + NAD(+) = dihydroxyacetone + NADH + H(+). It functions in the pathway polyol metabolism; glycerol fermentation; glycerone phosphate from glycerol (oxidative route): step 1/2. Functionally, catalyzes the NAD-dependent oxidation of glycerol to dihydroxyacetone (glycerone). The sequence is that of Glycerol dehydrogenase (gldA) from Thermotoga maritima (strain ATCC 43589 / DSM 3109 / JCM 10099 / NBRC 100826 / MSB8).